The sequence spans 340 residues: Flap endonuclease 1 (340 aa).

The interval 1 to 98 (MGVPIGEIIP…KELEKRREAR (98 aa)) is N-domain. Mg(2+)-binding residues include D27, D80, E152, E154, D173, D175, and D236. Residues 116 to 258 (EARKYAQRAT…KALEIVRHSK (143 aa)) form an I-domain region. The interaction with PCNA stretch occupies residues 330–338 (KQSTLESWF).

This sequence belongs to the XPG/RAD2 endonuclease family. FEN1 subfamily. As to quaternary structure, interacts with PCNA. PCNA stimulates the nuclease activity without altering cleavage specificity. Requires Mg(2+) as cofactor.

Functionally, structure-specific nuclease with 5'-flap endonuclease and 5'-3' exonuclease activities involved in DNA replication and repair. During DNA replication, cleaves the 5'-overhanging flap structure that is generated by displacement synthesis when DNA polymerase encounters the 5'-end of a downstream Okazaki fragment. Binds the unpaired 3'-DNA end and kinks the DNA to facilitate 5' cleavage specificity. Cleaves one nucleotide into the double-stranded DNA from the junction in flap DNA, leaving a nick for ligation. Also involved in the base excision repair (BER) pathway. Acts as a genome stabilization factor that prevents flaps from equilibrating into structures that lead to duplications and deletions. Also possesses 5'-3' exonuclease activity on nicked or gapped double-stranded DNA. The chain is Flap endonuclease 1 from Pyrococcus furiosus (strain ATCC 43587 / DSM 3638 / JCM 8422 / Vc1).